The primary structure comprises 133 residues: Ribosome-binding factor A (133 aa).

It belongs to the RbfA family. As to quaternary structure, monomer. Binds 30S ribosomal subunits, but not 50S ribosomal subunits or 70S ribosomes.

The protein localises to the cytoplasm. In terms of biological role, one of several proteins that assist in the late maturation steps of the functional core of the 30S ribosomal subunit. Associates with free 30S ribosomal subunits (but not with 30S subunits that are part of 70S ribosomes or polysomes). Required for efficient processing of 16S rRNA. May interact with the 5'-terminal helix region of 16S rRNA. The protein is Ribosome-binding factor A of Shigella boydii serotype 18 (strain CDC 3083-94 / BS512).